A 154-amino-acid polypeptide reads, in one-letter code: Protein X (154 aa).

Residues 68–117 form a mitochondrial targeting sequence region; sequence PCALRFTSARRMETTVNAHQILPKVLHKRTLGLSAMSTTDLEAYFKDCLF.

This sequence belongs to the orthohepadnavirus protein X family. As to quaternary structure, may form homodimer. May interact with host CEBPA, CFLAR, CREB1, DDB1, E4F1, HBXIP, HSPD1/HSP60, NFKBIA, POLR2E and SMAD4. Interacts with host SMC5-SMC6 complex and induces its degradation. Interacts with host TRPC4AP; leading to prevent ubiquitination of TRPC4AP. Interacts with host PLSCR1; this interaction promotes ubiquitination and degradation of HBx and impairs HBx-mediated cell proliferation. Post-translationally, a fraction may be phosphorylated in insect cells and HepG2 cells, a human hepatoblastoma cell line. Phosphorylated in vitro by host protein kinase C or mitogen-activated protein kinase. N-acetylated in insect cells.

The protein resides in the host cytoplasm. It is found in the host nucleus. The protein localises to the host mitochondrion. Multifunctional protein that plays a role in silencing host antiviral defenses and promoting viral transcription. Does not seem to be essential for HBV infection. May be directly involved in development of cirrhosis and liver cancer (hepatocellular carcinoma). Most of cytosolic activities involve modulation of cytosolic calcium. The effect on apoptosis is controversial depending on the cell types in which the studies have been conducted. May induce apoptosis by localizing in mitochondria and causing loss of mitochondrial membrane potential. May also modulate apoptosis by binding host CFLAR, a key regulator of the death-inducing signaling complex (DISC). Promotes viral transcription by using the host E3 ubiquitin ligase DDB1 to target the SMC5-SMC6 complex to proteasomal degradation. This host complex would otherwise bind to viral episomal DNA, and prevents its transcription. Moderately stimulates transcription of many different viral and cellular transcription elements. Promoters and enhancers stimulated by HBx contain DNA binding sites for NF-kappa-B, AP-1, AP-2, c-EBP, ATF/CREB, or the calcium-activated factor NF-AT. This chain is Protein X, found in Hepatitis B virus genotype E subtype ayw4 (isolate Kou) (HBV-E).